A 957-amino-acid polypeptide reads, in one-letter code: Glycine dehydrogenase (decarboxylating) (957 aa).

An N6-(pyridoxal phosphate)lysine modification is found at Lys702.

Belongs to the GcvP family. The glycine cleavage system is composed of four proteins: P, T, L and H. It depends on pyridoxal 5'-phosphate as a cofactor.

The catalysed reaction is N(6)-[(R)-lipoyl]-L-lysyl-[glycine-cleavage complex H protein] + glycine + H(+) = N(6)-[(R)-S(8)-aminomethyldihydrolipoyl]-L-lysyl-[glycine-cleavage complex H protein] + CO2. Functionally, the glycine cleavage system catalyzes the degradation of glycine. The P protein binds the alpha-amino group of glycine through its pyridoxal phosphate cofactor; CO(2) is released and the remaining methylamine moiety is then transferred to the lipoamide cofactor of the H protein. In Synechococcus sp. (strain RCC307), this protein is Glycine dehydrogenase (decarboxylating).